The sequence spans 127 residues: Large ribosomal subunit protein eL24 (127 aa).

A disordered region spans residues 93–127 (KRAQKPEVKQAAAEQAKREIKEKKKAAAKKAAPKK). The segment covering 115–127 (KKKAAAKKAAPKK) has biased composition (basic residues).

The protein belongs to the eukaryotic ribosomal protein eL24 family.

The chain is Large ribosomal subunit protein eL24 (rpl24) from Dictyostelium discoideum (Social amoeba).